Here is a 418-residue protein sequence, read N- to C-terminus: Glutamyl-tRNA reductase (418 aa).

Substrate is bound by residues 57 to 60 (TCNR), S113, 118 to 120 (DFE), and Q124. Residue C58 is the Nucleophile of the active site. 193 to 198 (GTGKIG) serves as a coordination point for NADP(+).

The protein belongs to the glutamyl-tRNA reductase family. In terms of assembly, homodimer.

It catalyses the reaction (S)-4-amino-5-oxopentanoate + tRNA(Glu) + NADP(+) = L-glutamyl-tRNA(Glu) + NADPH + H(+). The protein operates within porphyrin-containing compound metabolism; protoporphyrin-IX biosynthesis; 5-aminolevulinate from L-glutamyl-tRNA(Glu): step 1/2. Catalyzes the NADPH-dependent reduction of glutamyl-tRNA(Glu) to glutamate 1-semialdehyde (GSA). The polypeptide is Glutamyl-tRNA reductase (Christiangramia forsetii (strain DSM 17595 / CGMCC 1.15422 / KT0803) (Gramella forsetii)).